We begin with the raw amino-acid sequence, 322 residues long: Phosphatidylserine decarboxylase proenzyme (322 aa).

Catalysis depends on charge relay system; for autoendoproteolytic cleavage activity residues aspartate 90, histidine 147, and serine 254. Catalysis depends on serine 254, which acts as the Schiff-base intermediate with substrate; via pyruvic acid; for decarboxylase activity. Serine 254 carries the pyruvic acid (Ser); by autocatalysis modification. The interval 294–322 (EVEPVPLPEEEIKAEHDASPLVDDKKDET) is disordered. A compositionally biased stretch (basic and acidic residues) spans 303-322 (EEIKAEHDASPLVDDKKDET).

The protein belongs to the phosphatidylserine decarboxylase family. PSD-B subfamily. Prokaryotic type I sub-subfamily. Heterodimer of a large membrane-associated beta subunit and a small pyruvoyl-containing alpha subunit. Pyruvate is required as a cofactor. Is synthesized initially as an inactive proenzyme. Formation of the active enzyme involves a self-maturation process in which the active site pyruvoyl group is generated from an internal serine residue via an autocatalytic post-translational modification. Two non-identical subunits are generated from the proenzyme in this reaction, and the pyruvate is formed at the N-terminus of the alpha chain, which is derived from the carboxyl end of the proenzyme. The autoendoproteolytic cleavage occurs by a canonical serine protease mechanism, in which the side chain hydroxyl group of the serine supplies its oxygen atom to form the C-terminus of the beta chain, while the remainder of the serine residue undergoes an oxidative deamination to produce ammonia and the pyruvoyl prosthetic group on the alpha chain. During this reaction, the Ser that is part of the protease active site of the proenzyme becomes the pyruvoyl prosthetic group, which constitutes an essential element of the active site of the mature decarboxylase.

It localises to the cell membrane. The catalysed reaction is a 1,2-diacyl-sn-glycero-3-phospho-L-serine + H(+) = a 1,2-diacyl-sn-glycero-3-phosphoethanolamine + CO2. It participates in phospholipid metabolism; phosphatidylethanolamine biosynthesis; phosphatidylethanolamine from CDP-diacylglycerol: step 2/2. Catalyzes the formation of phosphatidylethanolamine (PtdEtn) from phosphatidylserine (PtdSer). In Salmonella arizonae (strain ATCC BAA-731 / CDC346-86 / RSK2980), this protein is Phosphatidylserine decarboxylase proenzyme.